We begin with the raw amino-acid sequence, 259 residues long: 14-3-3-like protein GF14 omega (259 aa).

Residues Ser67, Ser109, and Ser190 each carry the phosphoserine modification. Position 211 is a phosphothreonine (Thr211).

This sequence belongs to the 14-3-3 family. Interacts with CINV1.

The protein resides in the nucleus. Its subcellular location is the cytoplasm. In terms of biological role, is associated with a DNA binding complex that binds to the G box, a well-characterized cis-acting DNA regulatory element found in plant genes. The protein is 14-3-3-like protein GF14 omega (GRF2) of Arabidopsis thaliana (Mouse-ear cress).